The sequence spans 270 residues: Small ribosomal subunit protein eS1 (270 aa).

The disordered stretch occupies residues 235 to 270 (GTSKGGAASTAAVAKGEEGVKVDRPEGYEPPVLETV). Over residues 239-248 (GGAASTAAVA) the composition is skewed to low complexity. Residues 249 to 261 (KGEEGVKVDRPEG) show a composition bias toward basic and acidic residues.

This sequence belongs to the eukaryotic ribosomal protein eS1 family. As to quaternary structure, component of the small ribosomal subunit. Mature ribosomes consist of a small (40S) and a large (60S) subunit. The 40S subunit contains about 33 different proteins and 1 molecule of RNA (18S). The 60S subunit contains about 49 different proteins and 3 molecules of RNA (28S, 5.8S and 5S).

It localises to the cytoplasm. This Ixodes scapularis (Black-legged tick) protein is Small ribosomal subunit protein eS1.